The sequence spans 261 residues: Small ribosomal subunit protein eS4z (261 aa).

Residues 42–104 (LPLVLIIRNR…TNENFRLLYD (63 aa)) enclose the S4 RNA-binding domain.

The protein belongs to the eukaryotic ribosomal protein eS4 family.

The protein localises to the cytoplasm. The sequence is that of Small ribosomal subunit protein eS4z (RPS4A) from Arabidopsis thaliana (Mouse-ear cress).